A 429-amino-acid chain; its full sequence is 3-phosphoshikimate 1-carboxyvinyltransferase (429 aa).

The 3-phosphoshikimate site is built by lysine 23, serine 24, and arginine 28. Lysine 23 serves as a coordination point for phosphoenolpyruvate. Phosphoenolpyruvate-binding residues include glycine 97 and arginine 125. Residues serine 170, serine 171, glutamine 172, serine 198, aspartate 314, asparagine 338, and lysine 342 each coordinate 3-phosphoshikimate. Glutamine 172 contributes to the phosphoenolpyruvate binding site. The active-site Proton acceptor is the aspartate 314. Phosphoenolpyruvate contacts are provided by arginine 346, arginine 388, and lysine 413.

It belongs to the EPSP synthase family. As to quaternary structure, monomer.

The protein localises to the cytoplasm. The enzyme catalyses 3-phosphoshikimate + phosphoenolpyruvate = 5-O-(1-carboxyvinyl)-3-phosphoshikimate + phosphate. It functions in the pathway metabolic intermediate biosynthesis; chorismate biosynthesis; chorismate from D-erythrose 4-phosphate and phosphoenolpyruvate: step 6/7. Catalyzes the transfer of the enolpyruvyl moiety of phosphoenolpyruvate (PEP) to the 5-hydroxyl of shikimate-3-phosphate (S3P) to produce enolpyruvyl shikimate-3-phosphate and inorganic phosphate. The sequence is that of 3-phosphoshikimate 1-carboxyvinyltransferase from Pectobacterium carotovorum subsp. carotovorum (strain PC1).